Consider the following 92-residue polypeptide: MSAEVALVYRVLPESVEVDVEKLKEAIVNRLAPKYKVDKVEVEEIGFGIKALRFYIRMPESDEYSSDEVEEILRSVEGVGGFELEYFSRLSF.

The protein belongs to the EF-1-beta/EF-1-delta family.

Promotes the exchange of GDP for GTP in EF-1-alpha/GDP, thus allowing the regeneration of EF-1-alpha/GTP that could then be used to form the ternary complex EF-1-alpha/GTP/AAtRNA. The chain is Elongation factor 1-beta from Pyrobaculum calidifontis (strain DSM 21063 / JCM 11548 / VA1).